We begin with the raw amino-acid sequence, 166 residues long: Regulatory protein RecX (166 aa).

This sequence belongs to the RecX family.

Its subcellular location is the cytoplasm. Its function is as follows. Modulates RecA activity. This chain is Regulatory protein RecX, found in Salmonella choleraesuis (strain SC-B67).